A 391-amino-acid polypeptide reads, in one-letter code: CBS domain-containing protein CBSX5 (391 aa).

2 consecutive CBS domains span residues 16 to 81 and 331 to 391; these read GKPP…DHDH and MARK…ENDM.

This chain is CBS domain-containing protein CBSX5 (CBSX5), found in Arabidopsis thaliana (Mouse-ear cress).